A 356-amino-acid chain; its full sequence is Vanillin synthase, chloroplastic (356 aa).

A glycan (N-linked (GlcNAc...) asparagine) is linked at Asn-122. 2 cysteine pairs are disulfide-bonded: Cys-159/Cys-202 and Cys-193/Cys-235. Cys-162 is an active-site residue. Asn-251 carries an N-linked (GlcNAc...) asparagine glycan. An intrachain disulfide couples Cys-293 to Cys-343. Active-site residues include His-302 and Asn-322.

It belongs to the peptidase C1 family. As to quaternary structure, forms homodimers, homotrimers and homotetramers. In terms of tissue distribution, accumulates in the inner part of vanilla pods (at protein level). Expressed in single cells located a few cell layers from the inner epidermis.

Its subcellular location is the plastid. It localises to the chloroplast. The catalysed reaction is (E)-ferulate + H2O = vanillin + acetate. It carries out the reaction 4-O-beta-D-glucosyl-trans-ferulate + H2O = 4-O-beta-D-glucosyl-vanillin + acetate. It functions in the pathway aromatic compound metabolism; phenylpropanoid biosynthesis. Functionally, involved in the biosynthesis of vanillin (4-hydroxy-3-methoxy-benzaldehyde) and derivative natural products, key components of vanilla pods flavor. Catalyzes the double carbon bond cleavage of ferulic acid to vanillin and of their respective glucosides via a coupled non-oxidative hydratase/lyase reaction. Inactive toward p-coumaric acid, caffeic acid and their glucosides derivatives. This Vanilla planifolia (Vanilla) protein is Vanillin synthase, chloroplastic.